The chain runs to 380 residues: MAPNIRKSHPLLKMMNNSLIDLPTPSNISDWWNFGSLLGICLATQILTGLLLAAHYTADTTLAFSSVAHTCRNVQHGWLIRNLHANGASFFFICIYLHIGRGLYYGSYLYKETWNTGVILLLTLMATAFVGYVLPWGQMSFWGATVITNLFSAVPYIGQTLVEWAWGGFSVDNPTLTRFFTLHFLLPFMIMGLTLIHLTFLHESGSNNPLGIVSNCDKIPFHPYFSLKDILGFMLMLFPLMTLALFSPNLLGDPENFTPANPLVTPPHIKPEWYLLFAYAIRRSIPNKLGGVLALAASVLILFLAPLLHKSKQRTMTFRPFSQLLFWTLAANLLILTWVGSQPVEHPFIIIGQLASLTYFTILLILFPIIGALENKMLNY.

4 consecutive transmembrane segments (helical) span residues 34–54, 78–99, 114–134, and 179–199; these read FGSL…LLAA, WLIR…YLHI, WNTG…GYVL, and FFTL…IHLT. His-84 and His-98 together coordinate heme b. Residues His-183 and His-197 each coordinate heme b. His-202 provides a ligand contact to a ubiquinone. Helical transmembrane passes span 227–247, 289–309, 321–341, and 348–368; these read LKDI…ALFS, LGGV…PLLH, FSQL…WVGS, and FIII…ILFP.

Belongs to the cytochrome b family. The cytochrome bc1 complex contains 11 subunits: 3 respiratory subunits (MT-CYB, CYC1 and UQCRFS1), 2 core proteins (UQCRC1 and UQCRC2) and 6 low-molecular weight proteins (UQCRH/QCR6, UQCRB/QCR7, UQCRQ/QCR8, UQCR10/QCR9, UQCR11/QCR10 and a cleavage product of UQCRFS1). This cytochrome bc1 complex then forms a dimer. Heme b is required as a cofactor.

The protein resides in the mitochondrion inner membrane. Component of the ubiquinol-cytochrome c reductase complex (complex III or cytochrome b-c1 complex) that is part of the mitochondrial respiratory chain. The b-c1 complex mediates electron transfer from ubiquinol to cytochrome c. Contributes to the generation of a proton gradient across the mitochondrial membrane that is then used for ATP synthesis. This Antigone vipio (White-naped crane) protein is Cytochrome b (MT-CYB).